The primary structure comprises 715 residues: Poly(A) polymerase alpha-A (715 aa).

Residues F82–P84, T91, D95–D97, D149, K210, Y219, and G228–V229 each bind ATP. Mg(2+)-binding residues include D95, D97, and D149. The short motif at R472–K489 is the Nuclear localization signal 1 element. Disordered stretches follow at residues D510–P543, Q560–P590, and K607–D693. Composition is skewed to polar residues over residues M515–S539 and Q560–P588. The Nuclear localization signal 2 motif lies at K624 to K639. Over residues D655 to S673 the composition is skewed to basic and acidic residues. Residues S674–S692 show a composition bias toward polar residues.

Belongs to the poly(A) polymerase family. In terms of assembly, monomer. Mg(2+) serves as cofactor. Mn(2+) is required as a cofactor.

Its subcellular location is the nucleus. The enzyme catalyses RNA(n) + ATP = RNA(n)-3'-adenine ribonucleotide + diphosphate. Functionally, polymerase that creates the 3'-poly(A) tail of mRNA's. May acquire specificity through interaction with a cleavage and polyadenylation factor (CPSF). The polypeptide is Poly(A) polymerase alpha-A (papola-a) (Xenopus laevis (African clawed frog)).